A 485-amino-acid polypeptide reads, in one-letter code: NADH-quinone oxidoreductase subunit N (485 aa).

14 consecutive transmembrane segments (helical) span residues 8–28, 35–55, 71–91, 105–125, 127–147, 159–179, 203–223, 235–255, 271–291, 297–317, 326–346, 373–393, 408–430, and 455–475; these read LIAL…MLSI, FLNA…LWFV, GFAM…CTFA, FYLL…ANHL, SLFL…GYAF, YTIL…LVYA, LLAG…LVPF, PAPV…GVVM, VVLA…ALSQ, LLGY…IALQ, VGVY…VVSL, AAVM…LGFI, WWLV…RVAV, and IVVL…QPLI.

This sequence belongs to the complex I subunit 2 family. NDH-1 is composed of 13 different subunits. Subunits NuoA, H, J, K, L, M, N constitute the membrane sector of the complex.

Its subcellular location is the cell inner membrane. The enzyme catalyses a quinone + NADH + 5 H(+)(in) = a quinol + NAD(+) + 4 H(+)(out). Its function is as follows. NDH-1 shuttles electrons from NADH, via FMN and iron-sulfur (Fe-S) centers, to quinones in the respiratory chain. The immediate electron acceptor for the enzyme in this species is believed to be ubiquinone. Couples the redox reaction to proton translocation (for every two electrons transferred, four hydrogen ions are translocated across the cytoplasmic membrane), and thus conserves the redox energy in a proton gradient. The polypeptide is NADH-quinone oxidoreductase subunit N (Escherichia coli (strain ATCC 8739 / DSM 1576 / NBRC 3972 / NCIMB 8545 / WDCM 00012 / Crooks)).